We begin with the raw amino-acid sequence, 111 residues long: uncharacterized protein (111 aa).

The next 2 membrane-spanning stretches (helical) occupy residues Ile-7–Ile-27 and Ala-53–His-73.

Its subcellular location is the cell membrane. This is an uncharacterized protein from Bacillus anthracis.